Reading from the N-terminus, the 272-residue chain is Shikimate dehydrogenase (NADP(+)) (272 aa).

Shikimate is bound by residues 14–16 (SKS) and T61. Catalysis depends on K65, which acts as the Proton acceptor. E77 serves as a coordination point for NADP(+). Shikimate is bound by residues N86 and D102. Residues 126–130 (GAGGA), 149–154 (NRTASR), and M213 each bind NADP(+). Y215 provides a ligand contact to shikimate. Position 237 (G237) interacts with NADP(+).

It belongs to the shikimate dehydrogenase family. In terms of assembly, homodimer.

It catalyses the reaction shikimate + NADP(+) = 3-dehydroshikimate + NADPH + H(+). The protein operates within metabolic intermediate biosynthesis; chorismate biosynthesis; chorismate from D-erythrose 4-phosphate and phosphoenolpyruvate: step 4/7. Involved in the biosynthesis of the chorismate, which leads to the biosynthesis of aromatic amino acids. Catalyzes the reversible NADPH linked reduction of 3-dehydroshikimate (DHSA) to yield shikimate (SA). In Salmonella typhimurium (strain LT2 / SGSC1412 / ATCC 700720), this protein is Shikimate dehydrogenase (NADP(+)).